A 61-amino-acid polypeptide reads, in one-letter code: Large ribosomal subunit protein uL30 (61 aa).

This sequence belongs to the universal ribosomal protein uL30 family. In terms of assembly, part of the 50S ribosomal subunit.

This chain is Large ribosomal subunit protein uL30, found in Lactobacillus acidophilus (strain ATCC 700396 / NCK56 / N2 / NCFM).